Reading from the N-terminus, the 523-residue chain is 2-hydroxyisoflavanone synthase (523 aa).

Residues 2–22 traverse the membrane as a helical segment; sequence LVELAITLLVIALFIHLRPTL. Position 450 (cysteine 450) interacts with heme.

It belongs to the cytochrome P450 family. Heme serves as cofactor.

It is found in the microsome membrane. It carries out the reaction (2S)-liquiritigenin + reduced [NADPH--hemoprotein reductase] + O2 = (2R,3S)-2,4',7-trihydroxyisoflavanone + oxidized [NADPH--hemoprotein reductase] + H2O + H(+). The enzyme catalyses (2S)-naringenin + reduced [NADPH--hemoprotein reductase] + O2 = 2-hydroxy-2,3-dihydrogenistein + oxidized [NADPH--hemoprotein reductase] + H2O + H(+). In terms of biological role, 2-hydroxyisoflavanone synthase, which catalyzes the hydroxylation associated with 1,2-aryl migration of flavanones. Converts liquiritigenin and naringenin into highly unstable precursors of the isoflavones daidzein and genistein. Acts only on substrates with (2S)-chirality. In Glycyrrhiza echinata (Licorice), this protein is 2-hydroxyisoflavanone synthase (CYP93C2).